We begin with the raw amino-acid sequence, 107 residues long: Thiosulfate sulfurtransferase GlpE (107 aa).

The Rhodanese domain occupies 17-105; the sequence is RQGEAVLVDI…WLKAFPLETE (89 aa). Catalysis depends on Cys65, which acts as the Cysteine persulfide intermediate.

It belongs to the GlpE family.

It is found in the cytoplasm. It carries out the reaction thiosulfate + hydrogen cyanide = thiocyanate + sulfite + 2 H(+). It catalyses the reaction thiosulfate + [thioredoxin]-dithiol = [thioredoxin]-disulfide + hydrogen sulfide + sulfite + 2 H(+). In terms of biological role, transferase that catalyzes the transfer of sulfur from thiosulfate to thiophilic acceptors such as cyanide or dithiols. May function in a CysM-independent thiosulfate assimilation pathway by catalyzing the conversion of thiosulfate to sulfite, which can then be used for L-cysteine biosynthesis. This chain is Thiosulfate sulfurtransferase GlpE, found in Sodalis glossinidius (strain morsitans).